A 610-amino-acid polypeptide reads, in one-letter code: All-trans-retinol 13,14-reductase (610 aa).

Positions 1 to 18 (MWLPLVLFLAVLLLAVVC) are cleaved as a signal peptide.

Belongs to the carotenoid/retinoid oxidoreductase family. CrtISO subfamily. NAD(+) serves as cofactor. Requires NADP(+) as cofactor. It depends on FAD as a cofactor.

The protein resides in the endoplasmic reticulum membrane. It catalyses the reaction all-trans-13,14-dihydroretinol + A = all-trans-retinol + AH2. In terms of biological role, catalyzes the saturation of all-trans-retinol to all-trans-13,14-dihydroretinol. Does not exhibit any activity toward all-trans-retinoic acid, nor 9-cis, 11-cis or 13-cis-retinol isomers. May play a role in the metabolism of vitamin A. Independently of retinol conversion, may regulate liver metabolism upstream of MLXIPL/ChREBP. May play a role in adipocyte differentiation. This chain is All-trans-retinol 13,14-reductase (RETSAT), found in Macaca fascicularis (Crab-eating macaque).